We begin with the raw amino-acid sequence, 169 residues long: uncharacterized protein (169 aa).

The protein to M.tuberculosis Rv1480.

This is an uncharacterized protein from Mycobacterium avium.